The primary structure comprises 326 residues: Phenylalanine--tRNA ligase alpha subunit (326 aa).

Glu251 is a Mg(2+) binding site.

Belongs to the class-II aminoacyl-tRNA synthetase family. Phe-tRNA synthetase alpha subunit type 1 subfamily. As to quaternary structure, tetramer of two alpha and two beta subunits. Requires Mg(2+) as cofactor.

The protein resides in the cytoplasm. It carries out the reaction tRNA(Phe) + L-phenylalanine + ATP = L-phenylalanyl-tRNA(Phe) + AMP + diphosphate + H(+). The chain is Phenylalanine--tRNA ligase alpha subunit from Alteromonas mediterranea (strain DSM 17117 / CIP 110805 / LMG 28347 / Deep ecotype).